The following is a 501-amino-acid chain: ATP synthase subunit beta (501 aa).

Gly-153–Thr-160 is a binding site for ATP.

It belongs to the ATPase alpha/beta chains family. As to quaternary structure, F-type ATPases have 2 components, CF(1) - the catalytic core - and CF(0) - the membrane proton channel. CF(1) has five subunits: alpha(3), beta(3), gamma(1), delta(1), epsilon(1). CF(0) has three main subunits: a(1), b(2) and c(9-12). The alpha and beta chains form an alternating ring which encloses part of the gamma chain. CF(1) is attached to CF(0) by a central stalk formed by the gamma and epsilon chains, while a peripheral stalk is formed by the delta and b chains.

It is found in the cell inner membrane. It catalyses the reaction ATP + H2O + 4 H(+)(in) = ADP + phosphate + 5 H(+)(out). Its function is as follows. Produces ATP from ADP in the presence of a proton gradient across the membrane. The catalytic sites are hosted primarily by the beta subunits. The polypeptide is ATP synthase subunit beta (Cytophaga hutchinsonii (strain ATCC 33406 / DSM 1761 / CIP 103989 / NBRC 15051 / NCIMB 9469 / D465)).